Consider the following 447-residue polypeptide: Bifunctional protein GlmU (447 aa).

Positions Met-1–Arg-225 are pyrophosphorylase. UDP-N-acetyl-alpha-D-glucosamine-binding positions include Leu-7 to Gly-10, Lys-21, Gln-73, and Gly-78 to Thr-79. Residue Asp-103 participates in Mg(2+) binding. 4 residues coordinate UDP-N-acetyl-alpha-D-glucosamine: Gly-140, Glu-154, Asn-169, and Asn-223. Position 223 (Asn-223) interacts with Mg(2+). The interval Val-226–Gly-246 is linker. The interval Gly-247–Asn-447 is N-acetyltransferase. UDP-N-acetyl-alpha-D-glucosamine contacts are provided by Arg-328 and Lys-346. Catalysis depends on His-358, which acts as the Proton acceptor. The UDP-N-acetyl-alpha-D-glucosamine site is built by Tyr-361 and Asn-372. 3 residues coordinate acetyl-CoA: Ala-375, Ala-418, and Arg-435.

This sequence in the N-terminal section; belongs to the N-acetylglucosamine-1-phosphate uridyltransferase family. It in the C-terminal section; belongs to the transferase hexapeptide repeat family. In terms of assembly, homotrimer. Mg(2+) is required as a cofactor.

The protein resides in the cytoplasm. The catalysed reaction is alpha-D-glucosamine 1-phosphate + acetyl-CoA = N-acetyl-alpha-D-glucosamine 1-phosphate + CoA + H(+). It carries out the reaction N-acetyl-alpha-D-glucosamine 1-phosphate + UTP + H(+) = UDP-N-acetyl-alpha-D-glucosamine + diphosphate. It functions in the pathway nucleotide-sugar biosynthesis; UDP-N-acetyl-alpha-D-glucosamine biosynthesis; N-acetyl-alpha-D-glucosamine 1-phosphate from alpha-D-glucosamine 6-phosphate (route II): step 2/2. It participates in nucleotide-sugar biosynthesis; UDP-N-acetyl-alpha-D-glucosamine biosynthesis; UDP-N-acetyl-alpha-D-glucosamine from N-acetyl-alpha-D-glucosamine 1-phosphate: step 1/1. Its pathway is bacterial outer membrane biogenesis; LPS lipid A biosynthesis. Catalyzes the last two sequential reactions in the de novo biosynthetic pathway for UDP-N-acetylglucosamine (UDP-GlcNAc). The C-terminal domain catalyzes the transfer of acetyl group from acetyl coenzyme A to glucosamine-1-phosphate (GlcN-1-P) to produce N-acetylglucosamine-1-phosphate (GlcNAc-1-P), which is converted into UDP-GlcNAc by the transfer of uridine 5-monophosphate (from uridine 5-triphosphate), a reaction catalyzed by the N-terminal domain. The polypeptide is Bifunctional protein GlmU (Prochlorococcus marinus (strain MIT 9515)).